A 216-amino-acid polypeptide reads, in one-letter code: Transmembrane protein 54 (216 aa).

4 helical membrane passes run Leu-22–Met-42, Ile-62–Ser-82, Val-94–Ala-114, and Ser-155–Val-175.

It belongs to the TMEM54 family.

Its subcellular location is the membrane. This chain is Transmembrane protein 54 (Tmem54), found in Rattus norvegicus (Rat).